The following is a 420-amino-acid chain: Tyrosine--tRNA ligase (420 aa).

Residue Y38 participates in L-tyrosine binding. A 'HIGH' region motif is present at residues 43 to 52 (PTGDSLHIGH). Residues Y169 and Q173 each coordinate L-tyrosine. The 'KMSKS' region signature appears at 231 to 235 (KFGKS). K234 contacts ATP. The region spanning 353–419 (KNIVEFLVET…GKRKYTLVKI (67 aa)) is the S4 RNA-binding domain.

This sequence belongs to the class-I aminoacyl-tRNA synthetase family. TyrS type 1 subfamily. In terms of assembly, homodimer.

The protein localises to the cytoplasm. It carries out the reaction tRNA(Tyr) + L-tyrosine + ATP = L-tyrosyl-tRNA(Tyr) + AMP + diphosphate + H(+). In terms of biological role, catalyzes the attachment of tyrosine to tRNA(Tyr) in a two-step reaction: tyrosine is first activated by ATP to form Tyr-AMP and then transferred to the acceptor end of tRNA(Tyr). This Lactobacillus johnsonii (strain CNCM I-12250 / La1 / NCC 533) protein is Tyrosine--tRNA ligase.